The primary structure comprises 278 residues: Biotin synthase (278 aa).

One can recognise a Radical SAM core domain in the interval 1 to 227 (MQIMLCAISN…QSVVMVAGGR (227 aa)). Residues Cys-16, Cys-20, and Cys-23 each coordinate [4Fe-4S] cluster. [2Fe-2S] cluster-binding residues include Cys-60, Cys-95, and Cys-153.

Belongs to the radical SAM superfamily. Biotin synthase family. Homodimer. [4Fe-4S] cluster serves as cofactor. The cofactor is [2Fe-2S] cluster.

The catalysed reaction is (4R,5S)-dethiobiotin + (sulfur carrier)-SH + 2 reduced [2Fe-2S]-[ferredoxin] + 2 S-adenosyl-L-methionine = (sulfur carrier)-H + biotin + 2 5'-deoxyadenosine + 2 L-methionine + 2 oxidized [2Fe-2S]-[ferredoxin]. Its pathway is cofactor biosynthesis; biotin biosynthesis; biotin from 7,8-diaminononanoate: step 2/2. Functionally, catalyzes the conversion of dethiobiotin (DTB) to biotin by the insertion of a sulfur atom into dethiobiotin via a radical-based mechanism. This chain is Biotin synthase, found in Campylobacter jejuni subsp. jejuni serotype O:6 (strain 81116 / NCTC 11828).